Here is a 495-residue protein sequence, read N- to C-terminus: Glutamate--tRNA ligase 1 (495 aa).

The short motif at P10–G20 is the 'HIGH' region element. The short motif at K251–R255 is the 'KMSKS' region element. K254 contacts ATP.

It belongs to the class-I aminoacyl-tRNA synthetase family. Glutamate--tRNA ligase type 1 subfamily. As to quaternary structure, monomer.

It is found in the cytoplasm. The catalysed reaction is tRNA(Glu) + L-glutamate + ATP = L-glutamyl-tRNA(Glu) + AMP + diphosphate. Its function is as follows. Catalyzes the attachment of glutamate to tRNA(Glu) in a two-step reaction: glutamate is first activated by ATP to form Glu-AMP and then transferred to the acceptor end of tRNA(Glu). This is Glutamate--tRNA ligase 1 from Syntrophomonas wolfei subsp. wolfei (strain DSM 2245B / Goettingen).